Consider the following 60-residue polypeptide: UPF0434 protein mma_2578 (60 aa).

This sequence belongs to the UPF0434 family.

This is UPF0434 protein mma_2578 from Janthinobacterium sp. (strain Marseille) (Minibacterium massiliensis).